Consider the following 226-residue polypeptide: Ras-related protein Rab-32 (226 aa).

Position 2 is an N-acetylalanine (Ala2). Residues Val38, Gly39, Lys40, Thr41, Ser42, Ser53, Gln54, Tyr56, and Thr59 each contribute to the GTP site. Thr41 is a binding site for Mg(2+). Positions 50 to 64 match the Switch 1 motif; sequence QLFSQHYRATIGVDF. Residue Thr59 coordinates Mg(2+). Ser73 carries the phosphoserine modification. Residue Asp83 coordinates Mg(2+). Residues Gly86, Asn145, Lys146, Asp148, Ala177, and Lys178 each coordinate GTP. The Switch 2 motif lies at 86–99; sequence GQERFGNMTRVYYK. The interval 180 to 199 is PKA-RII subunit binding domain; that stretch reads NINIDEAARFLVENILANHQ. The disordered stretch occupies residues 202 to 226; the sequence is PSEENDGRIKLDEETMKKENKSHCC. The span at 206 to 226 shows a compositional bias: basic and acidic residues; the sequence is NDGRIKLDEETMKKENKSHCC. S-geranylgeranyl cysteine attachment occurs at residues Cys225 and Cys226.

The protein belongs to the small GTPase superfamily. Rab family. In terms of assembly, interacts with ANKRD27. A decreased interaction with ANKRD27 seen in the presence of SGSM2. Interacts with LRRK2 (via N-terminus); this interaction results in stimulation of RAB10 phosphorylation by LRRK2. Mg(2+) is required as a cofactor.

Its subcellular location is the mitochondrion. It localises to the mitochondrion outer membrane. The protein resides in the cytoplasmic vesicle. It is found in the phagosome. The protein localises to the phagosome membrane. Its subcellular location is the melanosome. It localises to the melanosome membrane. The enzyme catalyses GTP + H2O = GDP + phosphate + H(+). With respect to regulation, regulated by guanine the nucleotide exchange factor (GEF) BLOC-3 complex composed of HPS1 and HPS4 which promote the exchange of bound GDP for free GTP. Regulated by the GTPase activating protein (GAP) SGSM2/RUTBC1 which increases the GTP hydrolysis activity. Inhibited by GDP dissociation inhibitors (GDIs) which prevent Rab-GDP dissociation. Functionally, the small GTPases Rab are key regulators of intracellular membrane trafficking, from the formation of transport vesicles to their fusion with membranes. Rabs cycle between an inactive GDP-bound form and an active GTP-bound form that is able to recruit to membranes different set of downstream effectors directly responsible for vesicle formation, movement, tethering and fusion. Also acts as an A-kinase anchoring protein by binding to the type II regulatory subunit of protein kinase A and anchoring it to the mitochondrion. Also involved in synchronization of mitochondrial fission. Plays a role in the maturation of phagosomes that engulf pathogens, such as S.aureus and M.tuberculosis. Plays an important role in the control of melanin production and melanosome biogenesis. In concert with RAB38, regulates the proper trafficking of melanogenic enzymes TYR, TYRP1 and DCT/TYRP2 to melanosomes in melanocytes. Stimulates phosphorylation of RAB10 'Thr-73' by LRRK2. The chain is Ras-related protein Rab-32 (RAB32) from Sus scrofa (Pig).